Consider the following 320-residue polypeptide: RNA polymerase sigma factor SigA2 (320 aa).

The interval 89 to 159 is sigma-70 factor domain-2; it reads MIEANLRLVV…TRAIAQQSRT (71 aa). The Interaction with polymerase core subunit RpoC motif lies at 113–116; sequence DLIQ. The tract at residues 168-243 is sigma-70 factor domain-3; sequence EKLNKLKKTQ…EDEQSSPSDY (76 aa). Residues 256–310 form a sigma-70 factor domain-4 region; it reads LMAELTPQQQAVIALRYGLDEGDSLSLAKVGERLNISRERVRKLERQAMDHLRRR. A DNA-binding region (H-T-H motif) is located at residues 282–301; that stretch reads LAKVGERLNISRERVRKLER.

It belongs to the sigma-70 factor family.

It is found in the cytoplasm. In terms of biological role, sigma factors are initiation factors that promote the attachment of RNA polymerase to specific initiation sites and are then released. This sigma factor is a component of the biological clock pathway that affects the circadian expression of a subset of genes in this bacterium. The protein is RNA polymerase sigma factor SigA2 (sigA2) of Synechococcus elongatus (strain ATCC 33912 / PCC 7942 / FACHB-805) (Anacystis nidulans R2).